Consider the following 378-residue polypeptide: Cytochrome b (378 aa).

A run of 4 helical transmembrane segments spans residues 33–53 (SGSL…FLSM), 77–98 (WLIR…YFHI), 113–133 (XNVG…GYVL), and 178–198 (FFAF…IHLI). Residues H83 and H97 each contribute to the heme b site. Heme b is bound at residue H196. H201 contributes to the a ubiquinone binding site. 4 consecutive transmembrane segments (helical) span residues 226–246 (FKDL…ALFS), 288–308 (LGGV…PILH), 320–340 (LTQF…WIGG), and 347–367 (FIII…VLFP).

Belongs to the cytochrome b family. As to quaternary structure, the cytochrome bc1 complex contains 3 respiratory subunits (MT-CYB, CYC1 and UQCRFS1), 2 core proteins (UQCRC1 and UQCRC2) and probably 6 low-molecular weight proteins. Requires heme b as cofactor.

The protein resides in the mitochondrion inner membrane. In terms of biological role, component of the ubiquinol-cytochrome c reductase complex (complex III or cytochrome b-c1 complex) that is part of the mitochondrial respiratory chain. The b-c1 complex mediates electron transfer from ubiquinol to cytochrome c. Contributes to the generation of a proton gradient across the mitochondrial membrane that is then used for ATP synthesis. The protein is Cytochrome b (mt-cyb) of Nannacara anomala (Goldeneye cichlid).